A 1012-amino-acid chain; its full sequence is Translation initiation factor IF-2, chloroplastic (1012 aa).

Positions 75–102 (GNSVSLDSNSNSSSSSKSGGDDGTGFVL) are enriched in low complexity. Disordered stretches follow at residues 75–132 (GNSV…VEER), 147–294 (EKLG…KEKK), and 319–340 (APPKPGKAPSPGKFKDDFRKKG). Residues 152–175 (SKVNGDKNNGSVNKPVRNNANASP) are compositionally biased toward polar residues. The segment covering 183–194 (SAASLKSKTLKS) has biased composition (low complexity). Residues 208-231 (VVKEVPKPSYNKNEEEKSQTRGGE) are compositionally biased toward basic and acidic residues. Residues 240 to 257 (PQPPSKPQPLKPQQPSKP) show a composition bias toward pro residues. The segment covering 277–294 (VLRDKGAAETSVKSKEKK) has biased composition (basic and acidic residues). A tr-type G domain is found at 488-661 (DRPPVITIMG…MLVAELQELK (174 aa)). Positions 497 to 504 (GHVDHGKT) are G1. 497-504 (GHVDHGKT) contributes to the GTP binding site. Residues 522-526 (GITQG) are G2. Positions 547 to 550 (DTPG) are G3. Residues 547-551 (DTPGH) and 601-604 (NKID) contribute to the GTP site. A G4 region spans residues 601–604 (NKID). A G5 region spans residues 637-639 (SAL).

It belongs to the TRAFAC class translation factor GTPase superfamily. Classic translation factor GTPase family. IF-2 subfamily.

The protein localises to the plastid. It localises to the chloroplast. Functionally, one of the essential components for the initiation of protein synthesis. Protects formylmethionyl-tRNA from spontaneous hydrolysis and promotes its binding to the 30S ribosomal subunits. Also involved in the hydrolysis of GTP during the formation of the 70S ribosomal complex. The chain is Translation initiation factor IF-2, chloroplastic (IF2CP) from Phaseolus vulgaris (Kidney bean).